We begin with the raw amino-acid sequence, 216 residues long: MPIGVPKVPYRIPGDEEATWVDLYNVMYRERTLFLGQEIRCEITNHITGLMVYLSIEDGNSDIFLFINSLGGWLISGMAIFDTMQTVTPDIYTICLGIAASMASFILLGGEPTKRIAFPHARIMLHQPASAYYRARTPEFLLEVEELHKVREMITRVYALRTGKPFWVVSEDMERDVFMSADEAKAYGLVDIVGDEMIDEHCDTDPVWFPEMFKDW.

Serine 101 functions as the Nucleophile in the catalytic mechanism. Residue histidine 126 is part of the active site.

It belongs to the peptidase S14 family. Component of the chloroplastic Clp protease core complex.

It localises to the plastid. The protein localises to the chloroplast stroma. It carries out the reaction Hydrolysis of proteins to small peptides in the presence of ATP and magnesium. alpha-casein is the usual test substrate. In the absence of ATP, only oligopeptides shorter than five residues are hydrolyzed (such as succinyl-Leu-Tyr-|-NHMec, and Leu-Tyr-Leu-|-Tyr-Trp, in which cleavage of the -Tyr-|-Leu- and -Tyr-|-Trp bonds also occurs).. Cleaves peptides in various proteins in a process that requires ATP hydrolysis. Has a chymotrypsin-like activity. Plays a major role in the degradation of misfolded proteins. This is ATP-dependent Clp protease proteolytic subunit from Zea mays (Maize).